Here is a 133-residue protein sequence, read N- to C-terminus: Male-specific protein scotti (133 aa).

The tract at residues 11–57 (FPSNGLGNNNNDPNQQRGERPRQPHPDLGWILDAPNEPPRNRNPLLY) is disordered. Residues 14–24 (NGLGNNNNDPN) are compositionally biased toward low complexity. Asn-83 carries an N-linked (GlcNAc...) asparagine glycan.

The protein belongs to the male-specific scotti family.

In terms of biological role, post-meiotically transcribed gene that has a role in late spermiogenesis; required for actin cone progression during spermatid individualization. In Drosophila persimilis (Fruit fly), this protein is Male-specific protein scotti.